Here is an 848-residue protein sequence, read N- to C-terminus: Aryl hydrocarbon receptor (848 aa).

The propeptide occupies 1–9 (MSSGANITY). The disordered stretch occupies residues 1 to 38 (MSSGANITYASRKRRKPVQKTVKPIPAEGIKSNPSKRH). Short sequence motifs (nuclear localization signal) lie at residues 12–15 (RKRR) and 36–41 (KRHRDR). Residues 26-79 (PAEGIKSNPSKRHRDRLNTELDRLASLLPFPQDVINKLDKLSVLRLSVSYLRAK) form the bHLH domain. Residues 37–65 (RHRDRLNTELDRLASLLPFPQDVINKLDK) form a DNA-binding region. 3 required for maintaining the overall integrity of the AHR:ARNT heterodimer and its transcriptional activity regions span residues 49 to 81 (LASL…AKSF), 116 to 124 (LLQALNGFV), and 260 to 262 (FAI). The short motif at 63-71 (LDKLSVLRL) is the Nuclear export signal element. Positions 111 to 175 (QEGEFLLQAL…AEFQRQLHWA (65 aa)) constitute a PAS 1 domain. One can recognise a PAS 2 domain in the interval 266–336 (LQPPSILEIR…CAESHIRMIK (71 aa)). One can recognise a PAC domain in the interval 342 to 383 (MTVFRLLAKHSRWRWVQSNARLIYRNGRPDYIIVTQRPLTDE). The disordered stretch occupies residues 421–449 (LPIRTKSNTSRKDWAPQSTPSKDSFHPSS). Over residues 436–449 (PQSTPSKDSFHPSS) the composition is skewed to polar residues.

Homodimer. Heterodimer; efficient DNA binding requires dimerization with another bHLH protein. Interacts with ARNT; the heterodimer ARNT:AHR binds to core DNA sequence 5'-TGCGTG-3' within the dioxin response element (DRE) of target gene promoters and activates their transcription. Binds MYBBP1A. Interacts with coactivators including SRC-1, RIP140 and NOCA7, and with the corepressor SMRT. Interacts with NEDD8 and IVNS1ABP. Interacts with BMAL1. Interacts with HSP90AB1. Interacts with TIPARP; leading to mono-ADP-ribosylation of AHR and subsequent inhibition of AHR. Post-translationally, mono-ADP-ribosylated, leading to inhibit transcription activator activity of AHR.

The protein localises to the cytoplasm. Its subcellular location is the nucleus. Its function is as follows. Ligand-activated transcription factor that enables cells to adapt to changing conditions by sensing compounds from the environment, diet, microbiome and cellular metabolism, and which plays important roles in development, immunity and cancer. Upon ligand binding, translocates into the nucleus, where it heterodimerizes with ARNT and induces transcription by binding to xenobiotic response elements (XRE). Regulates a variety of biological processes, including angiogenesis, hematopoiesis, drug and lipid metabolism, cell motility and immune modulation. Xenobiotics can act as ligands: upon xenobiotic-binding, activates the expression of multiple phase I and II xenobiotic chemical metabolizing enzyme genes (such as the CYP1A1 gene). Mediates biochemical and toxic effects of halogenated aromatic hydrocarbons. Next to xenobiotics, natural ligands derived from plants, microbiota, and endogenous metabolism are potent AHR agonists. Tryptophan (Trp) derivatives constitute an important class of endogenous AHR ligands. Acts as a negative regulator of anti-tumor immunity: indoles and kynurenic acid generated by Trp catabolism act as ligand and activate AHR, thereby promoting AHR-driven cancer cell motility and suppressing adaptive immunity. Regulates the circadian clock by inhibiting the basal and circadian expression of the core circadian component PER1. Inhibits PER1 by repressing the CLOCK-BMAL1 heterodimer mediated transcriptional activation of PER1. The heterodimer ARNT:AHR binds to core DNA sequence 5'-TGCGTG-3' within the dioxin response element (DRE) of target gene promoters and activates their transcription. This Mus musculus castaneus (Southeastern Asian house mouse) protein is Aryl hydrocarbon receptor (Ahr).